We begin with the raw amino-acid sequence, 392 residues long: Speckle-type POZ protein-like (392 aa).

Residues 31–161 enclose the MATH domain; sequence KFSYMWTINN…DDKLTLYCEV (131 aa). Positions 200–267 constitute a BTB domain; the sequence is TDCSLFVEGK…IYTGGTPHVD (68 aa).

The protein belongs to the Tdpoz family. As to quaternary structure, homodimer. Heterodimer with SPOP. Component of cullin-RING-based BCR (BTB-CUL3-RBX1) E3 ubiquitin-protein ligase complexes containing homodimeric SPOPL or the heterodimer formed by SPOP and SPOPL.

It is found in the nucleus. It participates in protein modification; protein ubiquitination. Component of a cullin-RING-based BCR (BTB-CUL3-RBX1) E3 ubiquitin-protein ligase complex that mediates the ubiquitination and subsequent proteasomal degradation of target proteins, but with relatively low efficiency. In Xenopus laevis (African clawed frog), this protein is Speckle-type POZ protein-like (spopl).